The primary structure comprises 368 residues: Biglycan (368 aa).

Positions 1-16 (MKVLLLLCSCILVIHA) are cleaved as a signal peptide. A propeptide spanning residues 17–37 (LPFEQRGFWDFSMDDGMAMMK) is cleaved from the precursor. Cystine bridges form between Cys-63-Cys-69 and Cys-67-Cys-76. LRR repeat units lie at residues 82–102 (TSIP…NNKI), 103–126 (TEIK…NNKI), 127–150 (SKIN…KNNL), 151–171 (EEIP…ENKI), 172–195 (KKVP…GNPL), 196–220 (ENGG…EAKL), 221–241 (SGIP…NNKI), 242–265 (QAIE…HNNI), 266–289 (RMIE…NNKL), 290–312 (SKVP…SNNI), 313–342 (TQVG…NNPV), and 343–368 (PYWE…NYRK). 2 N-linked (GlcNAc...) asparagine glycosylation sites follow: Asn-270 and Asn-311. Cys-321 and Cys-354 are joined by a disulfide.

Belongs to the small leucine-rich proteoglycan (SLRP) family. SLRP class I subfamily.

The protein resides in the secreted. It is found in the extracellular space. Its subcellular location is the extracellular matrix. Functionally, may be involved in collagen fiber assembly. The protein is Biglycan (bgn) of Xenopus laevis (African clawed frog).